We begin with the raw amino-acid sequence, 1434 residues long: Probable ATP-dependent RNA helicase spindle-E (1434 aa).

The Helicase ATP-binding domain occupies 125 to 292; sequence LAAINAHPVI…FATTNSIPPV (168 aa). 138 to 145 serves as a coordination point for ATP; that stretch reads GETGCGKT. Positions 238–241 match the DEAH box motif; that stretch reads DEVH. Positions 339–526 constitute a Helicase C-terminal domain; it reads KIIVIIDNME…NSVLKAKVLN (188 aa). In terms of domain architecture, Tudor spans 938–1001; that stretch reads AGDITKGMMV…RLMPRELTEQ (64 aa).

Belongs to the DEAD box helicase family. DEAH subfamily.

The protein resides in the cytoplasm. The enzyme catalyses ATP + H2O = ADP + phosphate + H(+). Its function is as follows. Probable ATP-binding RNA helicase which plays a central role during spermatogenesis and oogenesis by repressing transposable elements and preventing their mobilization, which is essential for the germline integrity. Acts via the piRNA metabolic process, which mediates the repression of transposable elements during meiosis by forming complexes composed of piRNAs and Piwi and govern the methylation and subsequent repression of transposons. Involved in the repression of LTR retrotransposon copia. Also involved in telomere regulation by repressing specialized telomeric retroelements HeT-A, TAHRE, and TART; Drosophila telomeres being maintained by transposition of specialized telomeric retroelements. Involved in telomeric trans-silencing, a repression mechanism by which a transposon or a transgene inserted in subtelomeric heterochromatin has the capacity to repress in trans in the female germline, a homologous transposon, or transgene located in euchromatin. Involved in the repression of testis-expressed Stellate genes by the homologous Su(Ste) repeats. Required for anteroposterior and dorsoventral axis formation during oogenesis. This Drosophila sechellia (Fruit fly) protein is Probable ATP-dependent RNA helicase spindle-E (spn-E).